A 229-amino-acid chain; its full sequence is Probable calcium-binding protein CML22 (229 aa).

EF-hand domains lie at 53–88 (EGLR…LKLS), 89–124 (LSDE…IYLL), 145–180 (SIFD…EDYP), and 184–219 (SPSH…WVGL). The Ca(2+) site is built by D66, D68, N70, T72, and E77.

Functionally, potential calcium sensor. The protein is Probable calcium-binding protein CML22 (CML22) of Arabidopsis thaliana (Mouse-ear cress).